The chain runs to 574 residues: E3 ubiquitin-protein ligase TRIM23 (574 aa).

The RING-type; degenerate zinc finger occupies 31 to 76; that stretch reads CGVCEDVFSLQGDKVPRLLLCGHTVCHDCLTRLPLHGRAIRCPFDR. The B box-type; degenerate zinc finger occupies 122–168; sequence ESIIRCDEDEAHLASVYCTVCATHLCSECSQVTHSTKTLAKHRRVPL. Residues 352–379 are a coiled coil; that stretch reads RVVLAKQEITRLLETLQKQQQQFTEVAD. The ARF-like stretch occupies residues 390-574; it reads TFTKDNRVHI…LVAAGVLDVA (185 aa). Residues 411-418, 454-458, and 513-516 each bind GTP; these read GLDGAGKT, DVGGK, and NKQD.

In the C-terminal section; belongs to the small GTPase superfamily. Arf family. Homodimer. Interacts with PSCD1. Interacts with UBE2D2. Interacts with TBK1 (via N-terminal kinase domain) and p62/SQSTM1. As to quaternary structure, (Microbial infection) Interacts with human cytomegalovirus protein UL144; this interaction might cause autoubiquitination of TRAF6, leading to NF-kappa-B activation.

Its subcellular location is the cytoplasm. It localises to the endomembrane system. The protein resides in the golgi apparatus membrane. The protein localises to the lysosome membrane. It catalyses the reaction S-ubiquitinyl-[E2 ubiquitin-conjugating enzyme]-L-cysteine + [acceptor protein]-L-lysine = [E2 ubiquitin-conjugating enzyme]-L-cysteine + N(6)-ubiquitinyl-[acceptor protein]-L-lysine.. Its pathway is protein modification; protein ubiquitination. Acts as an E3 ubiquitin-protein ligase. Plays an essential role in autophagy activation during viral infection. Mechanistically, activates TANK-binding kinase 1/TBK1 by facilitating its dimerization and ability to phosphorylate the selective autophagy receptor SQSTM1. In order to achieve this function, TRIM23 mediates 'Lys-27'-linked auto-ubiquitination of its ADP-ribosylation factor (ARF) domain to induce its GTPase activity and its recruitment to autophagosomes. Its function is as follows. (Microbial infection) Mediates TRAF6 auto-ubiquitination in the presence of human cytomegalovirus protein UL144, resulting in the virally controlled activation of NF-kappa-B stimulation at early times of HCMV infection. The polypeptide is E3 ubiquitin-protein ligase TRIM23 (TRIM23) (Homo sapiens (Human)).